Consider the following 69-residue polypeptide: Atypical cationic antimicrobial peptide (69 aa).

An N-terminal signal peptide occupies residues 1 to 22 (MAFLKKSLFLVLFLGLVSLSIC). The propeptide occupies 23–45 (DEEKRENEDEENQEDDEQSEMRR). A disordered region spans residues 25 to 45 (EKRENEDEENQEDDEQSEMRR). The span at 30-40 (EDEENQEDDEQ) shows a compositional bias: acidic residues.

The protein belongs to the frog skin active peptide (FSAP) family. In terms of assembly, monomer and/or weakly self-associated, oligomer, and amyloid-like fibril. Can adopt a monomeric nonamphipathic alpha-helical conformation, possibly with the aid of its cationic N- and C-termini, when bound to anionic membranes. Forms stable and ordered beta-sheet aggregates in aqueous environment or when bound to anionic or zwitterionic phospholipid vesicles. As to expression, expressed by the skin glands.

Its subcellular location is the secreted. The protein localises to the target cell membrane. Atypical cationic antimicrobial peptide with potent activity against Gram-negative and Gram-positive bacteria. Acts by inducing permeabilization of bacterial membrane. In vitro, also shows chemoattractant activity, which is mediated through a G protein-coupled receptor (probably FPR2 coupled to the ERK1/2 MAPK kinase pathway). Has slow-kinetic self-association and amyloid-like properties that modulate its activity. The soluble, weakly self-associated forms act on leukocytes to promote chemotaxis but have low antibacterial activity, the oligomers exhibit potent antimicrobial activity, whereas the amyloid-like fibrils have a very weak antibacterial activity. The membrane composition has a great influence on the peptide behavior. The peptide induces membrane leakage and insertion to a lesser extent in model membranes of the anionic lipid phosphatidylglycerol (PG) than in the model membranes of the zwitterionic lipid phosphatidylcholine (PC) vesicles. It forms more fibrils in PC than in PG. Membrane perturbations are more observed in the presence of PG than in the presence of PC. The peptide shows low hemolytic activity. The chain is Atypical cationic antimicrobial peptide from Phyllomedusa sauvagei (Sauvage's leaf frog).